The sequence spans 126 residues: Probable S-adenosyl-L-methionine-binding protein MJ1583 (126 aa).

A TsaA-like domain is found at 4-126 (LKPIGVVEQN…FSEKLDCPKI (123 aa)). Residues 45 to 46 (HK), arginine 75, and 106 to 109 (YNET) each bind S-adenosyl-L-methionine.

The protein belongs to the tRNA methyltransferase O family.

The chain is Probable S-adenosyl-L-methionine-binding protein MJ1583 from Methanocaldococcus jannaschii (strain ATCC 43067 / DSM 2661 / JAL-1 / JCM 10045 / NBRC 100440) (Methanococcus jannaschii).